Here is a 432-residue protein sequence, read N- to C-terminus: Glutamine synthetase, chloroplastic (432 aa).

The GS beta-grasp domain maps to 79–159; the sequence is IIAEYIWIGG…VICDTYTPQG (81 aa). The 267-residue stretch at 166–432 folds into the GS catalytic domain; the sequence is KRHKAAQIFS…LAAQKLSLNV (267 aa).

The protein belongs to the glutamine synthetase family. In terms of assembly, homooctamer.

The protein resides in the plastid. Its subcellular location is the chloroplast. It catalyses the reaction L-glutamate + NH4(+) + ATP = L-glutamine + ADP + phosphate + H(+). In terms of biological role, the light-modulated chloroplast enzyme, encoded by a nuclear gene and expressed primarily in leaves, is responsible for the reassimilation of the ammonia generated by photorespiration. The protein is Glutamine synthetase, chloroplastic (GLN2) of Daucus carota (Wild carrot).